We begin with the raw amino-acid sequence, 79 residues long: Defensin-like protein 3 (79 aa).

The first 29 residues, 1–29 (MAKFASIVALLFAALVVFAAFEAPTVVEA), serve as a signal peptide directing secretion. Disulfide bonds link C32–C79, C43–C64, C49–C73, and C53–C75.

It belongs to the DEFL family.

Its subcellular location is the secreted. In terms of biological role, possesses antifungal activity sensitive to inorganic cations. The polypeptide is Defensin-like protein 3 (AFP3) (Raphanus sativus (Radish)).